The primary structure comprises 144 residues: Transcriptional regulator SlyA (144 aa).

The region spanning 2 to 135 (ESPLGSDLAR…LIKLVAKLEH (134 aa)) is the HTH marR-type domain. Residues 49–72 (QIQLAKAIGIEQPSLVRTLDQLED) constitute a DNA-binding region (H-T-H motif).

This sequence belongs to the SlyA family. In terms of assembly, homodimer.

Functionally, transcription regulator that can specifically activate or repress expression of target genes. Required to activate expression of virulent genes. This is Transcriptional regulator SlyA from Salmonella choleraesuis (strain SC-B67).